The sequence spans 306 residues: N-acetylmuramic acid 6-phosphate etherase (306 aa).

Positions Thr59–Lys222 constitute an SIS domain. The active-site Proton donor is Glu87. Glu118 is an active-site residue.

Belongs to the GCKR-like family. MurNAc-6-P etherase subfamily. In terms of assembly, homodimer.

It carries out the reaction N-acetyl-D-muramate 6-phosphate + H2O = N-acetyl-D-glucosamine 6-phosphate + (R)-lactate. It functions in the pathway amino-sugar metabolism; N-acetylmuramate degradation. In terms of biological role, specifically catalyzes the cleavage of the D-lactyl ether substituent of MurNAc 6-phosphate, producing GlcNAc 6-phosphate and D-lactate. This Microcystis aeruginosa (strain NIES-843 / IAM M-2473) protein is N-acetylmuramic acid 6-phosphate etherase.